A 75-amino-acid chain; its full sequence is Small ribosomal subunit protein eS31 (75 aa).

Cysteine 41, cysteine 44, cysteine 60, and cysteine 63 together coordinate Zn(2+). The C4-type zinc finger occupies 41–63 (CPRCGSIMAHHLKPNERWSCGKC).

It belongs to the eukaryotic ribosomal protein eS31 family. In terms of assembly, part of the 30S ribosomal subunit. Zn(2+) is required as a cofactor.

The chain is Small ribosomal subunit protein eS31 from Saccharolobus solfataricus (strain ATCC 35092 / DSM 1617 / JCM 11322 / P2) (Sulfolobus solfataricus).